A 441-amino-acid polypeptide reads, in one-letter code: ATP-dependent RNA helicase RhlB (441 aa).

A Q motif motif is present at residues 9 to 37 (QKFADFSLNKEIKTALNESGFEFCTPIQA). The 180-residue stretch at 40–219 (LPILLQKKDI…YDHMNEPEKV (180 aa)) folds into the Helicase ATP-binding domain. An ATP-binding site is contributed by 53-60 (AQTGTGKT). A DEAD box motif is present at residues 165–168 (DEAD). The 148-residue stretch at 243 to 390 (KMRLLLSLIE…VTNYDSEGLL (148 aa)) folds into the Helicase C-terminal domain. A disordered region spans residues 401–441 (RKHNNRPQQGRNNSGRPQGRNGNRAGGRNGPRRHDQVRRHS).

This sequence belongs to the DEAD box helicase family. RhlB subfamily. In terms of assembly, component of the RNA degradosome, which is a multiprotein complex involved in RNA processing and mRNA degradation.

It is found in the cytoplasm. It carries out the reaction ATP + H2O = ADP + phosphate + H(+). Functionally, DEAD-box RNA helicase involved in RNA degradation. Has RNA-dependent ATPase activity and unwinds double-stranded RNA. This chain is ATP-dependent RNA helicase RhlB, found in Shewanella woodyi (strain ATCC 51908 / MS32).